Here is a 211-residue protein sequence, read N- to C-terminus: Prolactin-1 (211 aa).

The N-terminal stretch at 1–23 (MARRSQGTKLHLAVLCLVVSCHA) is a signal peptide. Cystine bridges form between Cys-69–Cys-184 and Cys-201–Cys-211.

This sequence belongs to the somatotropin/prolactin family.

Its subcellular location is the secreted. This is Prolactin-1 (prl1) from Oncorhynchus keta (Chum salmon).